The primary structure comprises 277 residues: S-formylglutathione hydrolase FrmB (277 aa).

Active-site charge relay system residues include S145, D221, and H254.

This sequence belongs to the esterase D family.

The enzyme catalyses S-formylglutathione + H2O = formate + glutathione + H(+). Its function is as follows. Serine hydrolase involved in the detoxification of formaldehyde. Hydrolyzes S-formylglutathione to glutathione and formate. This chain is S-formylglutathione hydrolase FrmB (frmB), found in Escherichia coli O139:H28 (strain E24377A / ETEC).